Here is a 205-residue protein sequence, read N- to C-terminus: Probable thymidylate kinase (205 aa).

Residue 10–17 (GIDGSGKS) coordinates ATP.

Belongs to the thymidylate kinase family.

The enzyme catalyses dTMP + ATP = dTDP + ADP. This is Probable thymidylate kinase from Methanosarcina barkeri (strain Fusaro / DSM 804).